The chain runs to 219 residues: Ribose-5-phosphate isomerase A (219 aa).

Substrate is bound by residues 28-31 (TGST), 81-84 (DGAD), and 94-97 (KGGG). E103 functions as the Proton acceptor in the catalytic mechanism. Substrate is bound at residue K121.

Belongs to the ribose 5-phosphate isomerase family. Homodimer.

The enzyme catalyses aldehydo-D-ribose 5-phosphate = D-ribulose 5-phosphate. The protein operates within carbohydrate degradation; pentose phosphate pathway; D-ribose 5-phosphate from D-ribulose 5-phosphate (non-oxidative stage): step 1/1. Catalyzes the reversible conversion of ribose-5-phosphate to ribulose 5-phosphate. In Shewanella loihica (strain ATCC BAA-1088 / PV-4), this protein is Ribose-5-phosphate isomerase A.